The primary structure comprises 974 residues: ATP-dependent RNA helicase DBP7 (974 aa).

A disordered region spans residues 1–135; sequence MDDNDDGLML…SSAASSSRKA (135 aa). Positions 13–24 are enriched in low complexity; the sequence is AAPAAGSASVSS. Over residues 25–48 the composition is skewed to basic residues; the sequence is KRSKQTAKARFAQKRTAHQLRKQA. 3 stretches are compositionally biased toward low complexity: residues 67-85, 92-102, and 118-133; these read PASA…SPAA, ATSTSSAALSA, and TSRS…SSSR. Positions 200 to 230 match the Q motif motif; the sequence is SDFASCGLDPLLVYHLASKMNIGSNPTAIQK. In terms of domain architecture, Helicase ATP-binding spans 236–477; it reads LLHPGLDRDI…GKTLVNPKII (242 aa). 249-256 lines the ATP pocket; the sequence is AQTGSGKT. Positions 381-384 match the DEAD box motif; the sequence is DEAD. Residues 531–747 form the Helicase C-terminal domain; that stretch reads LLRSYISRAR…TRKITPASIE (217 aa). The interval 836–887 is disordered; it reads KSSAIGASSTPASSHETTNKKRMRIAPDTAESDSSSDSSDDAGSDYESHSNK. Residues 840-851 show a composition bias toward polar residues; the sequence is IGASSTPASSHE.

This sequence belongs to the DEAD box helicase family. DDX31/DBP7 subfamily.

It localises to the nucleus. It is found in the nucleolus. It catalyses the reaction ATP + H2O = ADP + phosphate + H(+). ATP-binding RNA helicase involved in the biogenesis of 60S ribosomal subunits and is required for the normal formation of 25S and 5.8S rRNAs. In Mycosarcoma maydis (Corn smut fungus), this protein is ATP-dependent RNA helicase DBP7 (DBP7).